The primary structure comprises 115 residues: Large ribosomal subunit protein P2 (115 aa).

Position 1 is an N-acetylmethionine (Met1). A Phosphoserine modification is found at Ser19. An N6-acetyllysine; alternate modification is found at Lys21. Lys21 is modified (N6-succinyllysine; alternate). Over residues 76–90 (APGSAAPAAGSAPAA) the composition is skewed to low complexity. Residues 76-115 (APGSAAPAAGSAPAAAEEKKDEKKEESEESDDDMGFGLFD) are disordered. A phosphoserine mark is found at Ser79 and Ser86. The span at 91 to 101 (AEEKKDEKKEE) shows a compositional bias: basic and acidic residues. 2 positions are modified to phosphoserine: Ser102 and Ser105.

This sequence belongs to the eukaryotic ribosomal protein P1/P2 family. Heterodimer with RPLP1 at the lateral ribosomal stalk of the large ribosomal subunit.

Its function is as follows. Plays an important role in the elongation step of protein synthesis. The polypeptide is Large ribosomal subunit protein P2 (Rplp2) (Rattus norvegicus (Rat)).